The chain runs to 292 residues: 4-hydroxy-tetrahydrodipicolinate synthase (292 aa).

Pyruvate is bound at residue Thr45. Residue Tyr133 is the Proton donor/acceptor of the active site. Lys162 functions as the Schiff-base intermediate with substrate in the catalytic mechanism. Ile204 is a binding site for pyruvate.

It belongs to the DapA family. In terms of assembly, homotetramer; dimer of dimers.

The protein resides in the cytoplasm. The enzyme catalyses L-aspartate 4-semialdehyde + pyruvate = (2S,4S)-4-hydroxy-2,3,4,5-tetrahydrodipicolinate + H2O + H(+). The protein operates within amino-acid biosynthesis; L-lysine biosynthesis via DAP pathway; (S)-tetrahydrodipicolinate from L-aspartate: step 3/4. Its function is as follows. Catalyzes the condensation of (S)-aspartate-beta-semialdehyde [(S)-ASA] and pyruvate to 4-hydroxy-tetrahydrodipicolinate (HTPA). In Maridesulfovibrio salexigens (strain ATCC 14822 / DSM 2638 / NCIMB 8403 / VKM B-1763) (Desulfovibrio salexigens), this protein is 4-hydroxy-tetrahydrodipicolinate synthase.